Reading from the N-terminus, the 1025-residue chain is Retrovirus-related Pol polyprotein from type-1 retrotransposable element R2 (1025 aa).

The span at 1-11 (NQIKKSNTSTG) shows a compositional bias: polar residues. Residues 1 to 38 (NQIKKSNTSTGARIPKAMTNPADNFAGGQWKPPGRRSA) are disordered. The C2H2-type zinc-finger motif lies at 46-69 (FVCEHCLRAFTTNTGRGLHIKRAH). Residues 146 to 158 (NRARETELTRLET) show a composition bias toward basic and acidic residues. Residues 146-172 (NRARETELTRLETADEDPASQEQDNPN) form a disordered region. Residues 358-635 (MIMYHGQCPR…DQWKYLGVVY (278 aa)) enclose the Reverse transcriptase domain. The segment at 755–1025 (SLLGGDWVAE…YRTERRRTAN (271 aa)) is nucleic acid-binding endonuclease.

It carries out the reaction DNA(n) + a 2'-deoxyribonucleoside 5'-triphosphate = DNA(n+1) + diphosphate. The chain is Retrovirus-related Pol polyprotein from type-1 retrotransposable element R2 from Nasonia vitripennis (Parasitic wasp).